The sequence spans 478 residues: Cytochrome c-552 (478 aa).

Residues 1–26 (MARKTLRARRFFSLIFPFFFITSVYA) form the signal peptide. His94 contributes to the heme c binding site. Residues Cys122, Cys125, and Lys126 each contribute to the heme site. Heme c contacts are provided by Cys160, Cys163, His164, Cys209, Cys212, and His213. Residues Glu215, Tyr216, Lys261, and Gln263 each coordinate Ca(2+). Residue Tyr216 coordinates substrate. His264 serves as a coordination point for substrate. The heme c site is built by His275, Cys282, Cys285, His286, His301, Cys314, Cys317, His318, and His393.

This sequence belongs to the cytochrome c-552 family. The cofactor is Ca(2+). Heme c serves as cofactor.

The protein localises to the periplasm. The enzyme catalyses 6 Fe(III)-[cytochrome c] + NH4(+) + 2 H2O = 6 Fe(II)-[cytochrome c] + nitrite + 8 H(+). It participates in nitrogen metabolism; nitrate reduction (assimilation). Catalyzes the reduction of nitrite to ammonia, consuming six electrons in the process. The protein is Cytochrome c-552 of Salmonella dublin (strain CT_02021853).